Here is a 262-residue protein sequence, read N- to C-terminus: Purine nucleoside phosphorylase SSP1584 (262 aa).

Residues His79, Cys124, and His141 each coordinate Zn(2+).

This sequence belongs to the purine nucleoside phosphorylase YfiH/LACC1 family. In terms of assembly, homodimer. Cu(2+) is required as a cofactor. The cofactor is Zn(2+).

The enzyme catalyses adenosine + phosphate = alpha-D-ribose 1-phosphate + adenine. The catalysed reaction is S-methyl-5'-thioadenosine + phosphate = 5-(methylsulfanyl)-alpha-D-ribose 1-phosphate + adenine. It catalyses the reaction inosine + phosphate = alpha-D-ribose 1-phosphate + hypoxanthine. It carries out the reaction adenosine + H2O + H(+) = inosine + NH4(+). Functionally, purine nucleoside enzyme that catalyzes the phosphorolysis of adenosine and inosine nucleosides, yielding D-ribose 1-phosphate and the respective free bases, adenine and hypoxanthine. Also catalyzes the phosphorolysis of S-methyl-5'-thioadenosine into adenine and S-methyl-5-thio-alpha-D-ribose 1-phosphate. Also has adenosine deaminase activity. This is Purine nucleoside phosphorylase SSP1584 from Staphylococcus saprophyticus subsp. saprophyticus (strain ATCC 15305 / DSM 20229 / NCIMB 8711 / NCTC 7292 / S-41).